The chain runs to 228 residues: CD302 antigen (228 aa).

The N-terminal stretch at 1-20 (MPHAALSSLVLLSLATAIVA) is a signal peptide. Topologically, residues 21-165 (DCPSSTWVQF…YDKKYLSDNH (145 aa)) are extracellular. Residues 30-149 (FQGSCYAFLQ…CEISSVEGTL (120 aa)) enclose the C-type lectin domain. Asn107 carries an N-linked (GlcNAc...) asparagine glycan. A disulfide bridge connects residues Cys125 and Cys140. The chain crosses the membrane as a helical span at residues 166 to 186 (ILISTLVIASTVTLAVLGAII). The Cytoplasmic portion of the chain corresponds to 187-228 (WFLYRRNARSGFTSFSPAPLSPYSDGCALVVAEEDEYAVQLD).

Its subcellular location is the membrane. The protein resides in the cell projection. It is found in the filopodium. The protein localises to the cytoplasm. It localises to the cell cortex. Its subcellular location is the microvillus. Potential multifunctional C-type lectin receptor that may play roles in endocytosis and phagocytosis as well as in cell adhesion and migration. The polypeptide is CD302 antigen (Cd302) (Mus musculus (Mouse)).